Consider the following 407-residue polypeptide: Carbamoyl phosphate synthase small chain (407 aa).

Positions 1–205 are CPSase; that stretch reads MTETTSKTAP…LADGYGEQDT (205 aa). L-glutamine contacts are provided by serine 60, glycine 257, and glycine 259. Positions 209–397 constitute a Glutamine amidotransferase type-1 domain; it reads HVVALDFGVK…INLIREKKGE (189 aa). The active-site Nucleophile is cysteine 286. Positions 287, 290, 328, 330, and 331 each coordinate L-glutamine. Active-site residues include histidine 370 and glutamate 372.

This sequence belongs to the CarA family. As to quaternary structure, composed of two chains; the small (or glutamine) chain promotes the hydrolysis of glutamine to ammonia, which is used by the large (or ammonia) chain to synthesize carbamoyl phosphate. Tetramer of heterodimers (alpha,beta)4.

The catalysed reaction is hydrogencarbonate + L-glutamine + 2 ATP + H2O = carbamoyl phosphate + L-glutamate + 2 ADP + phosphate + 2 H(+). It catalyses the reaction L-glutamine + H2O = L-glutamate + NH4(+). It participates in amino-acid biosynthesis; L-arginine biosynthesis; carbamoyl phosphate from bicarbonate: step 1/1. The protein operates within pyrimidine metabolism; UMP biosynthesis via de novo pathway; (S)-dihydroorotate from bicarbonate: step 1/3. In terms of biological role, small subunit of the glutamine-dependent carbamoyl phosphate synthetase (CPSase). CPSase catalyzes the formation of carbamoyl phosphate from the ammonia moiety of glutamine, carbonate, and phosphate donated by ATP, constituting the first step of 2 biosynthetic pathways, one leading to arginine and/or urea and the other to pyrimidine nucleotides. The small subunit (glutamine amidotransferase) binds and cleaves glutamine to supply the large subunit with the substrate ammonia. This Brucella anthropi (strain ATCC 49188 / DSM 6882 / CCUG 24695 / JCM 21032 / LMG 3331 / NBRC 15819 / NCTC 12168 / Alc 37) (Ochrobactrum anthropi) protein is Carbamoyl phosphate synthase small chain.